Consider the following 232-residue polypeptide: Probable caffeoyl-CoA O-methyltransferase At4g26220 (232 aa).

Residue Lys-7 coordinates substrate. S-adenosyl-L-methionine-binding positions include Thr-49, Glu-71, 73 to 74 (GV), Ser-79, Asp-97, and Ala-126. Asp-149 is a substrate binding site. Position 149 (Asp-149) interacts with a divalent metal cation. Asp-151 serves as a coordination point for S-adenosyl-L-methionine. A divalent metal cation contacts are provided by Asp-175 and Asn-176.

Belongs to the class I-like SAM-binding methyltransferase superfamily. Cation-dependent O-methyltransferase family. CCoAMT subfamily. It depends on a divalent metal cation as a cofactor.

It carries out the reaction (E)-caffeoyl-CoA + S-adenosyl-L-methionine = (E)-feruloyl-CoA + S-adenosyl-L-homocysteine + H(+). It participates in aromatic compound metabolism; phenylpropanoid biosynthesis. Functionally, methylates caffeoyl-CoA to feruloyl-CoA and 5-hydroxyferuloyl-CoA to sinapoyl-CoA. Plays a role in the synthesis of feruloylated polysaccharides. Involved in the reinforcement of the plant cell wall. Also involved in the responding to wounding or pathogen challenge by the increased formation of cell wall-bound ferulic acid polymers. The chain is Probable caffeoyl-CoA O-methyltransferase At4g26220 from Arabidopsis thaliana (Mouse-ear cress).